The following is a 500-amino-acid chain: Proline--tRNA ligase (500 aa).

This sequence belongs to the class-II aminoacyl-tRNA synthetase family. ProS type 3 subfamily. As to quaternary structure, homodimer.

It localises to the cytoplasm. It catalyses the reaction tRNA(Pro) + L-proline + ATP = L-prolyl-tRNA(Pro) + AMP + diphosphate. In terms of biological role, catalyzes the attachment of proline to tRNA(Pro) in a two-step reaction: proline is first activated by ATP to form Pro-AMP and then transferred to the acceptor end of tRNA(Pro). This chain is Proline--tRNA ligase, found in Paramagnetospirillum magneticum (strain ATCC 700264 / AMB-1) (Magnetospirillum magneticum).